The primary structure comprises 245 residues: 1-(5-phosphoribosyl)-5-[(5-phosphoribosylamino)methylideneamino] imidazole-4-carboxamide isomerase (245 aa).

Asp-7 (proton acceptor) is an active-site residue. The active-site Proton donor is the Asp-129.

Belongs to the HisA/HisF family.

The protein localises to the cytoplasm. The catalysed reaction is 1-(5-phospho-beta-D-ribosyl)-5-[(5-phospho-beta-D-ribosylamino)methylideneamino]imidazole-4-carboxamide = 5-[(5-phospho-1-deoxy-D-ribulos-1-ylimino)methylamino]-1-(5-phospho-beta-D-ribosyl)imidazole-4-carboxamide. It functions in the pathway amino-acid biosynthesis; L-histidine biosynthesis; L-histidine from 5-phospho-alpha-D-ribose 1-diphosphate: step 4/9. This chain is 1-(5-phosphoribosyl)-5-[(5-phosphoribosylamino)methylideneamino] imidazole-4-carboxamide isomerase, found in Shewanella sp. (strain ANA-3).